We begin with the raw amino-acid sequence, 632 residues long: Chaperone protein HtpG (632 aa).

The segment at 1–345 (MTTAAHAETL…SKDLSLNVSR (345 aa)) is a; substrate-binding. Residues 346-561 (ELLQKDPQVD…EHDMGYQMRR (216 aa)) are b. The segment at 562–632 (LMEAAGQPLP…VQRLNKLLSH (71 aa)) is c.

It belongs to the heat shock protein 90 family. In terms of assembly, homodimer.

Its subcellular location is the cytoplasm. Functionally, molecular chaperone. Has ATPase activity. The chain is Chaperone protein HtpG from Chromohalobacter salexigens (strain ATCC BAA-138 / DSM 3043 / CIP 106854 / NCIMB 13768 / 1H11).